A 295-amino-acid polypeptide reads, in one-letter code: Large ribosomal subunit protein uL2 (295 aa).

Residues 243-295 form a disordered region; it reads WRPHTRGTAMNPVDHPHGGGEGRTRGKHPESPWDGRRRDTRREGVRSTPISLS. Over residues 256 to 287 the composition is skewed to basic and acidic residues; the sequence is DHPHGGGEGRTRGKHPESPWDGRRRDTRREGV.

The protein belongs to the universal ribosomal protein uL2 family. In terms of assembly, part of the 50S ribosomal subunit. Forms a bridge to the 30S subunit in the 70S ribosome.

In terms of biological role, one of the primary rRNA binding proteins. Required for association of the 30S and 50S subunits to form the 70S ribosome, for tRNA binding and peptide bond formation. It has been suggested to have peptidyltransferase activity; this is somewhat controversial. Makes several contacts with the 16S rRNA in the 70S ribosome. The sequence is that of Large ribosomal subunit protein uL2 from Aquifex pyrophilus.